A 349-amino-acid chain; its full sequence is Bifunctional nitrilase/nitrile hydratase NIT4A (349 aa).

The CN hydrolase domain occupies 29-301 (VRATVVQAST…EALISADLDL (273 aa)). E69 acts as the Proton acceptor in catalysis. The active site involves K156. C190 serves as the catalytic Nucleophile.

It belongs to the carbon-nitrogen hydrolase superfamily. Nitrilase family. In terms of tissue distribution, ubiquitous.

The enzyme catalyses L-asparagine = 3-cyano-L-alanine + H2O. It catalyses the reaction 3-cyano-L-alanine + 2 H2O = L-aspartate + NH4(+). Involved in the cyanide detoxification pathway. Has nitrilase and nitrile-hydratase activity in the ratio 4.0:1, producing both asparagine and aspartic acid from beta-cyano-L-alanine (Ala(CN)). Can also use 3-phenylpropionitrile as substrate, but not indole-3-acetonitrile. This is Bifunctional nitrilase/nitrile hydratase NIT4A (NIT4A) from Lupinus angustifolius (Narrow-leaved blue lupine).